The following is a 497-amino-acid chain: MATQFDENTVITIFGASGDLSKKKTFPALFGLYREGYLNPTTKIIGYARSKLSNEDLREKVKPFLKKPNGAKDDAKVNEFLSMVSYHAGPYDSDEGYLELKKIIEEFEAEKKVDEPHRLFYLALPPSIFIDVCSKLKENLYTESGIQRVIVEKPFGHDLQSATELQEKLAPLFSEDELFRIDHYLGKEMVKNLLLMRFGNTFLNAAWNKENIQSVQVVFKEPFGTEGRGGYFDSIGIIRDVMQNHLLQVLTLLTMERPVSFDPESVRDEKVKVLKAFSPIDHDDILIGQYGRSVDGSKPSYLDDETVKEDSKCVTFAAIGFKIANERWDGVPIVMRAGKALNEGKVEIRIQFRRVASGMFTDIPNNELVIRIQPNEAIYLKCNAKTPGLANENQTTELDLTYSERYKNYWIPEAYESLIRDALLGDHSNFVRDDELDVSWKLFTPLLNYLEGPDGPQPKIYPYGCRSPDGLVEFLADHGYTFSKPGSYQWPVTTPKM.

NADP(+) contacts are provided by residues 15–22 (GASGDLSK), arginine 49, and lysine 153. Residues lysine 153, 183–187 (HYLGK), glutamate 221, and aspartate 240 each bind D-glucose 6-phosphate. Residue histidine 245 is the Proton acceptor of the active site. Arginine 336 contacts NADP(+). Position 339 (lysine 339) interacts with D-glucose 6-phosphate. Lysine 345, arginine 349, and arginine 371 together coordinate NADP(+). Residue glutamine 373 participates in D-glucose 6-phosphate binding. Residues 379–381 (YLK), 399–401 (DLT), and arginine 466 contribute to the NADP(+) site.

The protein belongs to the glucose-6-phosphate dehydrogenase family.

The enzyme catalyses D-glucose 6-phosphate + NADP(+) = 6-phospho-D-glucono-1,5-lactone + NADPH + H(+). It functions in the pathway carbohydrate degradation; pentose phosphate pathway; D-ribulose 5-phosphate from D-glucose 6-phosphate (oxidative stage): step 1/3. Functionally, catalyzes the rate-limiting step of the oxidative pentose-phosphate pathway, which represents a route for the dissimilation of carbohydrates besides glycolysis. The main function of this enzyme is to provide reducing power (NADPH) and pentose phosphates for fatty acid and nucleic acid synthesis. This is Glucose-6-phosphate 1-dehydrogenase (ZWF) from Kluyveromyces lactis (strain ATCC 8585 / CBS 2359 / DSM 70799 / NBRC 1267 / NRRL Y-1140 / WM37) (Yeast).